Here is a 171-residue protein sequence, read N- to C-terminus: 3-hydroxydecanoyl-[acyl-carrier-protein] dehydratase (171 aa).

Residue H70 is part of the active site.

Belongs to the thioester dehydratase family. FabA subfamily. In terms of assembly, homodimer.

It is found in the cytoplasm. It carries out the reaction a (3R)-hydroxyacyl-[ACP] = a (2E)-enoyl-[ACP] + H2O. It catalyses the reaction (3R)-hydroxydecanoyl-[ACP] = (2E)-decenoyl-[ACP] + H2O. The enzyme catalyses (2E)-decenoyl-[ACP] = (3Z)-decenoyl-[ACP]. Its pathway is lipid metabolism; fatty acid biosynthesis. Its function is as follows. Necessary for the introduction of cis unsaturation into fatty acids. Catalyzes the dehydration of (3R)-3-hydroxydecanoyl-ACP to E-(2)-decenoyl-ACP and then its isomerization to Z-(3)-decenoyl-ACP. Can catalyze the dehydratase reaction for beta-hydroxyacyl-ACPs with saturated chain lengths up to 16:0, being most active on intermediate chain length. This Methylobacillus flagellatus (strain ATCC 51484 / DSM 6875 / VKM B-1610 / KT) protein is 3-hydroxydecanoyl-[acyl-carrier-protein] dehydratase.